The following is a 310-amino-acid chain: Mitochondrial 2-oxodicarboxylate carrier 1 (310 aa).

The next 6 membrane-spanning stretches (helical) occupy residues 9–29 (LPFI…LLVM), 78–97 (SHLY…KRAI), 126–146 (IYSG…FELV), 179–199 (GLEA…GIIF), 219–239 (LIAG…FDVV), and 281–301 (MRLA…MDFF). Solcar repeat units follow at residues 9–108 (LPFI…FQTF), 120–204 (MTQK…IRKL), and 213–300 (EKTR…VMDF).

Belongs to the mitochondrial carrier (TC 2.A.29) family.

It is found in the mitochondrion inner membrane. In terms of biological role, transports C5-C7 oxodicarboxylates across the inner membranes of mitochondria. Can transport 2-oxoadipate, 2-oxoglutarate, adipate, glutarate, 2-oxopimelate, oxaloacetate, citrate and malate. The main physiological role is probably to supply 2-oxoadipate and 2-oxoglutarate from the mitochondrial matrix to the cytosol where they are used in the biosynthesis of lysine and glutamate, respectively, and in lysine catabolism. This chain is Mitochondrial 2-oxodicarboxylate carrier 1 (ODC1), found in Saccharomyces cerevisiae (strain ATCC 204508 / S288c) (Baker's yeast).